Reading from the N-terminus, the 341-residue chain is Trace amine-associated receptor 13c (341 aa).

Residues 1–34 (MDLSSQEYDPSQFCFPAVNNSCLKGTHHVSTQTV) are Extracellular-facing. Asn-19 carries N-linked (GlcNAc...) asparagine glycosylation. Intrachain disulfides connect Cys-22–Cys-186 and Cys-105–Cys-186. Residues 35–55 (VYLILASAMTVTVLGNSVVII) traverse the membrane as a helical segment. Residues 56-68 (SIAHFKQLQTPTN) are Cytoplasmic-facing. A helical membrane pass occupies residues 69–89 (ILVMSLALADLLLGLVVMPFS). Over 90–105 (MIRSVDGCWYYGETFC) the chain is Extracellular. A helical membrane pass occupies residues 106-126 (LLHTGFDLFLTSVSIFHLIFI). Residues 127–147 (AVDRHQAVCFPLQYPTRITIP) lie on the Cytoplasmic side of the membrane. A helical membrane pass occupies residues 148 to 168 (VAWVMVMISWSMAAFYSYGVV). Residues 169-195 (YSKANLEGLEEYIASVYCMGGCTLYFN) lie on the Extracellular side of the membrane. Residues 196-219 (ALWSVLDTLLTFFLPCSVMVGLYA) form a helical membrane-spanning segment. Topologically, residues 220–257 (RIFVVAKKHIKSITEANQNENENVFKNPRRSERKAAKT) are cytoplasmic. The helical transmembrane segment at 258-278 (LGIVVGAFILCWLPFFINSLV) threads the bilayer. The Extracellular portion of the chain corresponds to 279–292 (DPYINFSTPYALFD). A glycan (N-linked (GlcNAc...) asparagine) is linked at Asn-283. A helical membrane pass occupies residues 293–313 (AFGWLGYTNSTLNPIIYGLFY). Residues 314–341 (PWFRKTLSLIVTLRIFEPNSSDINLFTV) lie on the Cytoplasmic side of the membrane.

Belongs to the G-protein coupled receptor 1 family. As to expression, expressed in olfactory epithelium (at protein level). Detected in a sparse population of olfactory sensory neurons.

The protein localises to the cell membrane. Its function is as follows. Olfactory receptor for medium length odd-chained diamines including cadaverine which is generated by bacterial decarboxylation of the basic amino acid lysine and contributes to the odor of decomposing tissue. Mediates pronounced innate aversion behavior to cadaverine. The polypeptide is Trace amine-associated receptor 13c (Danio rerio (Zebrafish)).